Here is a 155-residue protein sequence, read N- to C-terminus: NADPH-dependent 7-cyano-7-deazaguanine reductase (155 aa).

Polar residues predominate over residues 1–20 (MMPNTDVSSLSMLGQQTETA). Positions 1-26 (MMPNTDVSSLSMLGQQTETAKSPEEA) are disordered. Catalysis depends on cysteine 53, which acts as the Thioimide intermediate. Aspartate 60 functions as the Proton donor in the catalytic mechanism. Substrate contacts are provided by residues 75–77 (VES) and 94–95 (HE).

Belongs to the GTP cyclohydrolase I family. QueF type 1 subfamily.

Its subcellular location is the cytoplasm. It carries out the reaction 7-aminomethyl-7-carbaguanine + 2 NADP(+) = 7-cyano-7-deazaguanine + 2 NADPH + 3 H(+). It functions in the pathway tRNA modification; tRNA-queuosine biosynthesis. In terms of biological role, catalyzes the NADPH-dependent reduction of 7-cyano-7-deazaguanine (preQ0) to 7-aminomethyl-7-deazaguanine (preQ1). The polypeptide is NADPH-dependent 7-cyano-7-deazaguanine reductase (Rhizobium etli (strain CIAT 652)).